The following is a 391-amino-acid chain: Saxitoxin and tetrodotoxin-binding protein 1 (391 aa).

Residues methionine 1 to alanine 20 form the signal peptide. 2 repeat units span residues proline 24–serine 202 and proline 203–aspartate 391. N-linked (GlcNAc...) asparagine glycans are attached at residues asparagine 54, asparagine 63, asparagine 97, asparagine 234, asparagine 268, asparagine 277, and asparagine 307.

In terms of assembly, homodimer or heterodimer of PSTBP1 and PSTBP2. Post-translationally, glycosylated.

Its subcellular location is the secreted. In terms of biological role, binds both saxitoxin and tetradotoxin. May play a role in toxin accumulation and/or excretion. The chain is Saxitoxin and tetrodotoxin-binding protein 1 (psbp1) from Takifugu pardalis (Panther puffer).